The primary structure comprises 261 residues: tRNA pseudouridine synthase A (261 aa).

The active-site Nucleophile is Asp51. Tyr109 lines the substrate pocket.

This sequence belongs to the tRNA pseudouridine synthase TruA family. As to quaternary structure, homodimer.

It catalyses the reaction uridine(38/39/40) in tRNA = pseudouridine(38/39/40) in tRNA. Its function is as follows. Formation of pseudouridine at positions 38, 39 and 40 in the anticodon stem and loop of transfer RNAs. This is tRNA pseudouridine synthase A from Shewanella baltica (strain OS185).